The chain runs to 813 residues: Calpain-7 (813 aa).

N-acetylmethionine is present on methionine 1. Threonine 95 is modified (phosphothreonine). The region spanning 232–540 (RERFAYPMPF…YDVIYLSWNP (309 aa)) is the Calpain catalytic domain. Residues cysteine 290, histidine 458, and asparagine 478 contribute to the active site. Residues 541–701 (GLLKESTCIH…INGKWSGQSA (161 aa)) form a domain III region. A domain N region spans residues 702–813 (GGCGNFQETH…VIPIKTTQLQ (112 aa)).

It belongs to the peptidase C2 family.

It is found in the nucleus. In terms of biological role, calcium-regulated non-lysosomal thiol-protease. This chain is Calpain-7 (CAPN7), found in Sus scrofa (Pig).